The chain runs to 441 residues: Fibroleukin (441 aa).

The first 15 residues, 1-15 (MKLANWCWLSSTVLA), serve as a signal peptide directing secretion. The N-linked (GlcNAc...) asparagine glycan is linked to asparagine 25. Positions 73–167 (SRIEEVFKEV…LEKLNLVNMN (95 aa)) form a coiled coil. Residues 102–128 (QADDSRDPGRNGLLLPGTGAPGETGDN) form a disordered region. Asparagine 179, asparagine 237, asparagine 265, and asparagine 338 each carry an N-linked (GlcNAc...) asparagine glycan. Positions 206 to 438 (VQQHLIYKDC…EVKMMIRPKH (233 aa)) constitute a Fibrinogen C-terminal domain.

Homotetramer; disulfide-linked.

It localises to the secreted. Its function is as follows. May play a role in physiologic lymphocyte functions at mucosal sites. The polypeptide is Fibroleukin (FGL2) (Bos taurus (Bovine)).